The chain runs to 142 residues: Transcriptional regulator MraZ (142 aa).

SpoVT-AbrB domains lie at 5–47 and 76–119; these read EYPY…PLAS and ANKA…NPER.

The protein belongs to the MraZ family. Forms oligomers.

It localises to the cytoplasm. It is found in the nucleoid. This Deinococcus geothermalis (strain DSM 11300 / CIP 105573 / AG-3a) protein is Transcriptional regulator MraZ.